The primary structure comprises 339 residues: Nicotinate-nucleotide--dimethylbenzimidazole phosphoribosyltransferase (339 aa).

Glu306 acts as the Proton acceptor in catalysis.

This sequence belongs to the CobT family.

The catalysed reaction is 5,6-dimethylbenzimidazole + nicotinate beta-D-ribonucleotide = alpha-ribazole 5'-phosphate + nicotinate + H(+). The protein operates within nucleoside biosynthesis; alpha-ribazole biosynthesis; alpha-ribazole from 5,6-dimethylbenzimidazole: step 1/2. In terms of biological role, catalyzes the synthesis of alpha-ribazole-5'-phosphate from nicotinate mononucleotide (NAMN) and 5,6-dimethylbenzimidazole (DMB). This is Nicotinate-nucleotide--dimethylbenzimidazole phosphoribosyltransferase from Brucella melitensis biotype 2 (strain ATCC 23457).